Reading from the N-terminus, the 452-residue chain is Exodeoxyribonuclease 7 large subunit (452 aa).

This sequence belongs to the XseA family. In terms of assembly, heterooligomer composed of large and small subunits.

It is found in the cytoplasm. It carries out the reaction Exonucleolytic cleavage in either 5'- to 3'- or 3'- to 5'-direction to yield nucleoside 5'-phosphates.. Bidirectionally degrades single-stranded DNA into large acid-insoluble oligonucleotides, which are then degraded further into small acid-soluble oligonucleotides. This chain is Exodeoxyribonuclease 7 large subunit, found in Bordetella avium (strain 197N).